Here is a 116-residue protein sequence, read N- to C-terminus: Protein cop (116 aa).

In terms of biological role, putative control of replication message. This chain is Protein cop (cop), found in Staphylococcus aureus.